Reading from the N-terminus, the 322-residue chain is Lignin-forming anionic peroxidase (322 aa).

Positions 1–27 are cleaved as a signal peptide; it reads MNTPTQSFRAKAAIFSLLLLSCMQCHA. Position 28 is a pyrrolidone carboxylic acid (glutamine 28). 4 cysteine pairs are disulfide-bonded: cysteine 38/cysteine 118, cysteine 71/cysteine 76, cysteine 124/cysteine 318, and cysteine 203/cysteine 229. The Proton acceptor role is filled by histidine 69. Ca(2+) is bound by residues aspartate 70, valine 73, glycine 75, aspartate 77, and serine 79. Position 166 (proline 166) interacts with substrate. Residue histidine 196 participates in heme b binding. Threonine 197 is a binding site for Ca(2+). N-linked (GlcNAc...) asparagine glycosylation is present at asparagine 213. Ca(2+) contacts are provided by aspartate 242, threonine 245, and aspartate 250.

The protein belongs to the peroxidase family. Classical plant (class III) peroxidase subfamily. Ca(2+) is required as a cofactor. It depends on heme b as a cofactor. In terms of tissue distribution, mesophyll protoplasts and to a much lesser extent, roots and germinating seeds.

It localises to the secreted. It carries out the reaction 2 a phenolic donor + H2O2 = 2 a phenolic radical donor + 2 H2O. Functionally, removal of H(2)O(2), oxidation of toxic reductants, biosynthesis and degradation of lignin, suberization, auxin catabolism, response to environmental stresses such as wounding, pathogen attack and oxidative stress. These functions might be dependent on each isozyme/isoform in each plant tissue. Its function is as follows. Plays an integral role in secondary cell wall biosynthesis by the polymerization of cinnamyl alcohols into lignin and by forming rigid cross-links between cellulose, pectin, hydroxy-proline-rich glycoproteins, and lignin. This chain is Lignin-forming anionic peroxidase, found in Nicotiana sylvestris (Wood tobacco).